Reading from the N-terminus, the 205-residue chain is NADH-quinone oxidoreductase subunit J (205 aa).

5 consecutive transmembrane segments (helical) span residues 1 to 21 (MPIF…CVVL), 26 to 46 (VYSV…MILL), 54 to 74 (LLIV…IMML), 89 to 109 (LSLS…TVIL), and 142 to 162 (FMLP…SCIT).

The protein belongs to the complex I subunit 6 family.

It localises to the cell membrane. The enzyme catalyses a quinone + NADH + 5 H(+)(in) = a quinol + NAD(+) + 4 H(+)(out). NDH-1 shuttles electrons from NADH, via FMN and iron-sulfur (Fe-S) centers, to quinones in the respiratory chain. Couples the redox reaction to proton translocation (for every two electrons transferred, four hydrogen ions are translocated across the cytoplasmic membrane), and thus conserves the redox energy in a proton gradient. The sequence is that of NADH-quinone oxidoreductase subunit J (nuoJ) from Rickettsia typhi (strain ATCC VR-144 / Wilmington).